A 205-amino-acid chain; its full sequence is Adenylate kinase (205 aa).

Position 11 to 16 (11 to 16 (GSGKGT)) interacts with ATP. The segment at 31–60 (STGDIFRHNVKSMTPLGVEAKRYIDNGDFV) is NMP. Residues threonine 32, arginine 37, 58–60 (DFV), 86–89 (GYPR), and glutamine 93 contribute to the AMP site. Residues 127-137 (KRAEIEGRADD) are LID. Arginine 128 lines the ATP pocket. AMP-binding residues include arginine 134 and arginine 145. Glycine 173 contacts ATP.

It belongs to the adenylate kinase family. In terms of assembly, monomer.

It localises to the cytoplasm. The enzyme catalyses AMP + ATP = 2 ADP. The protein operates within purine metabolism; AMP biosynthesis via salvage pathway; AMP from ADP: step 1/1. Functionally, catalyzes the reversible transfer of the terminal phosphate group between ATP and AMP. Plays an important role in cellular energy homeostasis and in adenine nucleotide metabolism. The protein is Adenylate kinase of Micrococcus luteus (strain ATCC 4698 / DSM 20030 / JCM 1464 / CCM 169 / CCUG 5858 / IAM 1056 / NBRC 3333 / NCIMB 9278 / NCTC 2665 / VKM Ac-2230) (Micrococcus lysodeikticus).